The chain runs to 338 residues: DNA-directed RNA polymerase subunit alpha (338 aa).

The segment at 1–234 is alpha N-terminal domain (alpha-NTD); that stretch reads MIHKNWAELI…DQLGIFVNFE (234 aa). The segment at 250–338 is alpha C-terminal domain (alpha-CTD); that stretch reads FNPLLLKKVD…DLAKKFEDSF (89 aa).

It belongs to the RNA polymerase alpha chain family. Homodimer. The RNAP catalytic core consists of 2 alpha, 1 beta, 1 beta' and 1 omega subunit. When a sigma factor is associated with the core the holoenzyme is formed, which can initiate transcription.

It carries out the reaction RNA(n) + a ribonucleoside 5'-triphosphate = RNA(n+1) + diphosphate. Functionally, DNA-dependent RNA polymerase catalyzes the transcription of DNA into RNA using the four ribonucleoside triphosphates as substrates. The sequence is that of DNA-directed RNA polymerase subunit alpha from Roseobacter denitrificans (strain ATCC 33942 / OCh 114) (Erythrobacter sp. (strain OCh 114)).